Consider the following 46-residue polypeptide: uncharacterized protein (46 aa).

This is an uncharacterized protein from Archaeoglobus fulgidus (strain ATCC 49558 / DSM 4304 / JCM 9628 / NBRC 100126 / VC-16).